A 142-amino-acid chain; its full sequence is Nucleoside diphosphate kinase (142 aa).

ATP contacts are provided by Lys-10, Phe-58, Arg-86, Thr-92, Arg-103, and Asn-113. The active-site Pros-phosphohistidine intermediate is the His-116.

Belongs to the NDK family. As to quaternary structure, homotetramer. It depends on Mg(2+) as a cofactor.

It is found in the cytoplasm. The enzyme catalyses a 2'-deoxyribonucleoside 5'-diphosphate + ATP = a 2'-deoxyribonucleoside 5'-triphosphate + ADP. It catalyses the reaction a ribonucleoside 5'-diphosphate + ATP = a ribonucleoside 5'-triphosphate + ADP. In terms of biological role, major role in the synthesis of nucleoside triphosphates other than ATP. The ATP gamma phosphate is transferred to the NDP beta phosphate via a ping-pong mechanism, using a phosphorylated active-site intermediate. This Ehrlichia chaffeensis (strain ATCC CRL-10679 / Arkansas) protein is Nucleoside diphosphate kinase.